We begin with the raw amino-acid sequence, 664 residues long: Trifunctional UDP-glucose 4,6-dehydratase/UDP-4-keto-6-deoxy-D-glucose 3,5-epimerase/UDP-4-keto-L-rhamnose-reductase RHM3 (664 aa).

13-19 (GAAGFIA) is a binding site for NAD(+). Threonine 132 provides a ligand contact to substrate. Aspartate 133 (proton donor) is an active-site residue. Catalysis depends on proton acceptor residues glutamate 134 and tyrosine 159. An NADP(+)-binding site is contributed by 386–392 (GKTGWLG).

It in the N-terminal section; belongs to the NAD(P)-dependent epimerase/dehydratase family. dTDP-glucose dehydratase subfamily. This sequence in the C-terminal section; belongs to the dTDP-4-dehydrorhamnose reductase family. Requires NAD(+) as cofactor. It depends on NADP(+) as a cofactor. As to expression, expressed in roots, stems, seedlings, and siliques. Lower expression in inflorescence tips, and leaves.

It catalyses the reaction UDP-alpha-D-glucose = UDP-4-dehydro-6-deoxy-alpha-D-glucose + H2O. It participates in carbohydrate biosynthesis. Trifunctional enzyme involved in UDP-beta-L-rhamnose biosynthesis, a precursor of the primary cell wall components rhamnogalacturonan I (RG-I) and rhamnogalacturonan II (RG-II). Catalyzes the dehydration of UDP-glucose to form UDP-4-dehydro-6-deoxy-D-glucose followed by the epimerization of the C3' and C5' positions of UDP-4-dehydro-6-deoxy-D-glucose to form UDP-4-keto-beta-L-rhamnose and the reduction of UDP-4-keto-beta-L-rhamnose to yield UDP-beta-L-rhamnose. This Arabidopsis thaliana (Mouse-ear cress) protein is Trifunctional UDP-glucose 4,6-dehydratase/UDP-4-keto-6-deoxy-D-glucose 3,5-epimerase/UDP-4-keto-L-rhamnose-reductase RHM3.